The chain runs to 153 residues: Actin-related protein 2/3 complex subunit 5-like protein (153 aa).

Ser64 bears the Phosphoserine mark.

This sequence belongs to the ARPC5 family. In terms of assembly, may be a component of the Arp2/3 complex in which it may replace ARPC5.

The protein localises to the cytoplasm. It localises to the cytoskeleton. In terms of biological role, may function as component of the Arp2/3 complex which is involved in regulation of actin polymerization and together with an activating nucleation-promoting factor (NPF) mediates the formation of branched actin networks. The sequence is that of Actin-related protein 2/3 complex subunit 5-like protein (Arpc5l) from Rattus norvegicus (Rat).